A 322-amino-acid chain; its full sequence is Probable heme-iron transport system permease protein IsdF (322 aa).

A run of 9 helical transmembrane segments spans residues 9-29 (LLFL…FVTG), 61-81 (ILIA…LQAA), 89-109 (ANII…MLFI), 114-134 (FYLP…IILL), 143-163 (VSMI…LEIL), 179-199 (IWSD…LTLL), 233-253 (VFLA…GIIV), 267-287 (VLIP…DLLG), and 294-314 (LEIP…IYLI).

The protein belongs to the binding-protein-dependent transport system permease family. FecCD subfamily.

The protein resides in the cell membrane. Functionally, part of the binding-protein-dependent transport system for heme-iron. Responsible for the translocation of the substrate across the membrane. This chain is Probable heme-iron transport system permease protein IsdF (isdF), found in Staphylococcus aureus (strain Mu3 / ATCC 700698).